We begin with the raw amino-acid sequence, 770 residues long: uncharacterized protein (770 aa).

Residues 736–770 (GSGQPGQSPANVGDDPNRMVQSSASQTQIGHVFNN) form a disordered region. Positions 754-770 (MVQSSASQTQIGHVFNN) are enriched in polar residues.

This is an uncharacterized protein from Caenorhabditis elegans.